Consider the following 575-residue polypeptide: E3 ubiquitin-protein ligase kcmf-1 (575 aa).

Residues 9 to 73 (HEGVSCDGCA…PMQLILSSVD (65 aa)) form a ZZ-type zinc finger. Positions 14, 17, 29, 32, 38, 41, 59, and 63 each coordinate Zn(2+). Disordered regions lie at residues 277–306 (PIYP…DDND) and 530–575 (EADE…INID). Composition is skewed to acidic residues over residues 297 to 306 (SADESEDDND) and 530 to 563 (EADE…ENDS).

It belongs to the KCMF1 family.

It localises to the cytoplasm. The protein localises to the late endosome. The protein resides in the lysosome. The enzyme catalyses S-ubiquitinyl-[E2 ubiquitin-conjugating enzyme]-L-cysteine + [acceptor protein]-L-lysine = [E2 ubiquitin-conjugating enzyme]-L-cysteine + N(6)-ubiquitinyl-[acceptor protein]-L-lysine.. It functions in the pathway protein modification; protein ubiquitination. Functionally, E3 ubiquitin-protein ligase which accepts ubiquitin from an E2 ubiquitin-conjugating enzyme and then transfers it to targeted substrates, promoting their degradation by the proteasome. The sequence is that of E3 ubiquitin-protein ligase kcmf-1 from Caenorhabditis elegans.